A 280-amino-acid chain; its full sequence is NAD-capped RNA hydrolase NudC (280 aa).

Arg83 contacts substrate. Residues Cys113, Cys116, Cys131, and Cys134 each coordinate Zn(2+). Tyr139 contacts substrate. Positions 140–268 constitute a Nudix hydrolase domain; sequence PRVAPAIIVL…ASRRLLDDAL (129 aa). Residues Ala177, Glu193, and Glu197 each coordinate a divalent metal cation. The short motif at 178 to 199 is the Nudix box element; that stretch reads GFVEPSETLEAAVHREVGEEVG. Position 211–218 (211–218) interacts with substrate; sequence QPWPFPHS. A divalent metal cation is bound at residue Glu238.

It belongs to the Nudix hydrolase family. NudC subfamily. Homodimer. It depends on Mg(2+) as a cofactor. Mn(2+) is required as a cofactor. The cofactor is Zn(2+).

The catalysed reaction is a 5'-end NAD(+)-phospho-ribonucleoside in mRNA + H2O = a 5'-end phospho-adenosine-phospho-ribonucleoside in mRNA + beta-nicotinamide D-ribonucleotide + 2 H(+). It carries out the reaction NAD(+) + H2O = beta-nicotinamide D-ribonucleotide + AMP + 2 H(+). The enzyme catalyses NADH + H2O = reduced beta-nicotinamide D-ribonucleotide + AMP + 2 H(+). Functionally, mRNA decapping enzyme that specifically removes the nicotinamide adenine dinucleotide (NAD) cap from a subset of mRNAs by hydrolyzing the diphosphate linkage to produce nicotinamide mononucleotide (NMN) and 5' monophosphate mRNA. The NAD-cap is present at the 5'-end of some mRNAs and stabilizes RNA against 5'-processing. Has preference for mRNAs with a 5'-end purine. Catalyzes the hydrolysis of a broad range of dinucleotide pyrophosphates. The protein is NAD-capped RNA hydrolase NudC of Deinococcus radiodurans (strain ATCC 13939 / DSM 20539 / JCM 16871 / CCUG 27074 / LMG 4051 / NBRC 15346 / NCIMB 9279 / VKM B-1422 / R1).